Reading from the N-terminus, the 280-residue chain is MVVKVGVAKLGNIAAGVMAELLLDERADREDMMTFMATSGTKLQKEDVDRVVSNLKAWQPDFAIVVSPNGVLEGPVGAREDLKAAGIPTIVITDDVTTKKEGWEALKASGFGYIIVKADAMIGARREFLDPVEMADYNGNLVKVLALTGAFRKLQLELDKVIDQVKAGKKGAELELPKLVLNSDNSTKGEFTNPYALAKARAAYEIAQAVAGVNVKGCFMTKEWTDYVPIVASAHEMMRAAANLCDQARELEKGCDGVIRKPHKKTGEIVSKVALISKPE.

It belongs to the MTD family.

The enzyme catalyses 5,10-methylenetetrahydromethanopterin + oxidized coenzyme F420-(gamma-L-Glu)(n) + 2 H(+) = 5,10-methenyl-5,6,7,8-tetrahydromethanopterin + reduced coenzyme F420-(gamma-L-Glu)(n). Its pathway is one-carbon metabolism; methanogenesis from CO(2); 5,10-methylene-5,6,7,8-tetrahydromethanopterin from 5,10-methenyl-5,6,7,8-tetrahydromethanopterin (coenzyme F420 route): step 1/1. In terms of biological role, catalyzes the reversible reduction of methenyl-H(4)MPT(+) to methylene-H(4)MPT. The polypeptide is F420-dependent methylenetetrahydromethanopterin dehydrogenase (Methanocorpusculum labreanum (strain ATCC 43576 / DSM 4855 / Z)).